The sequence spans 186 residues: Peptidyl-tRNA hydrolase (186 aa).

Y14 contributes to the tRNA binding site. H19 serves as the catalytic Proton acceptor. TRNA contacts are provided by Y61, N63, and N107.

Belongs to the PTH family. Monomer.

It localises to the cytoplasm. The catalysed reaction is an N-acyl-L-alpha-aminoacyl-tRNA + H2O = an N-acyl-L-amino acid + a tRNA + H(+). Hydrolyzes ribosome-free peptidyl-tRNAs (with 1 or more amino acids incorporated), which drop off the ribosome during protein synthesis, or as a result of ribosome stalling. Its function is as follows. Catalyzes the release of premature peptidyl moieties from peptidyl-tRNA molecules trapped in stalled 50S ribosomal subunits, and thus maintains levels of free tRNAs and 50S ribosomes. The polypeptide is Peptidyl-tRNA hydrolase (Helicobacter pylori (strain P12)).